A 255-amino-acid chain; its full sequence is Segregation and condensation protein A (255 aa).

This sequence belongs to the ScpA family. In terms of assembly, component of a cohesin-like complex composed of ScpA, ScpB and the Smc homodimer, in which ScpA and ScpB bind to the head domain of Smc. The presence of the three proteins is required for the association of the complex with DNA.

Its subcellular location is the cytoplasm. Its function is as follows. Participates in chromosomal partition during cell division. May act via the formation of a condensin-like complex containing Smc and ScpB that pull DNA away from mid-cell into both cell halves. The protein is Segregation and condensation protein A of Lactiplantibacillus plantarum (strain ATCC BAA-793 / NCIMB 8826 / WCFS1) (Lactobacillus plantarum).